The primary structure comprises 300 residues: Inositol polyphosphate multikinase beta (300 aa).

S78 is subject to Phosphoserine.

This sequence belongs to the inositol phosphokinase (IPK) family. Interacts with KIN10 and KIN11. Post-translationally, phosphorylated by KIN10. Expressed in leaves, stems, roots, siliques and flowers. Detected in vascular strands, stigma cells, the abscission zones of fully elongated siliques, the root central cylinder and the root tip.

It is found in the nucleus. It catalyses the reaction 1D-myo-inositol 1,4,5-trisphosphate + 2 ATP = 1D-myo-inositol 1,3,4,5,6-pentakisphosphate + 2 ADP + 2 H(+). It carries out the reaction 1D-myo-inositol 1,3,4,6-tetrakisphosphate + ATP = 1D-myo-inositol 1,3,4,5,6-pentakisphosphate + ADP + H(+). Down-regulated by KIN10 through its protein phosphorylation. In terms of biological role, inositol phosphate kinase with a broad substrate specificity. Phosphorylates inositol 1,4,5-trisphosphate (Ins(1,4,5)P3), inositol 1,4,5,6-tetrakisphosphate (Ins(1,4,5,6)P4), inositol 1,3,4,5-tetrakisphosphate (Ins(1,3,4,5)P4), inositol 1,3,4,6-tetrakisphosphate (Ins(1,3,4,6)P4) and inositol 1,2,3,4,6-pentakisphosphate (Ins(1,2,3,4,6)P5) but not inositol 1,4-bisphosphate (Ins(1,4)P2), inositol 1,3,4-trisphosphate (Ins(1,3,4)P3), inositol 1,2,6-trisphosphate (Ins(1,2,6)P3), inositol 3,4,5,6-tetrakisphosphate (Ins(3,4,5,6)P4), inositol 1,3,4,5,6-pentakisphosphate (Ins(1,3,4,5,6)P5), inositol 1,2,4,5,6-pentakisphosphate (Ins(1,2,4,5,6)P5) or inositol hexakisphosphate (InsP6). Involved in the auxin signaling pathway. Regulates axillary shoot branching and is required for phytate synthesis in seeds. This is Inositol polyphosphate multikinase beta (IPK2b) from Arabidopsis thaliana (Mouse-ear cress).